The chain runs to 234 residues: tRNA (guanine-N(1)-)-methyltransferase (234 aa).

S-adenosyl-L-methionine-binding positions include Gly-115 and 135-140 (VGDYIL).

It belongs to the RNA methyltransferase TrmD family. Homodimer.

Its subcellular location is the cytoplasm. It catalyses the reaction guanosine(37) in tRNA + S-adenosyl-L-methionine = N(1)-methylguanosine(37) in tRNA + S-adenosyl-L-homocysteine + H(+). Its function is as follows. Specifically methylates guanosine-37 in various tRNAs. This chain is tRNA (guanine-N(1)-)-methyltransferase, found in Rickettsia rickettsii (strain Iowa).